Reading from the N-terminus, the 212-residue chain is 3-oxo-tetronate 4-phosphate decarboxylase (212 aa).

The active-site Proton acceptor is the glutamate 79. Positions 79, 98, and 100 each coordinate Zn(2+). Tyrosine 125 acts as the Proton donor in catalysis. Histidine 165 contributes to the Zn(2+) binding site.

Belongs to the aldolase class II family. AraD/FucA subfamily. The cofactor is Zn(2+).

The catalysed reaction is 3-dehydro-4-O-phospho-D-erythronate + H(+) = dihydroxyacetone phosphate + CO2. It catalyses the reaction 3-dehydro-4-O-phospho-L-erythronate + H(+) = dihydroxyacetone phosphate + CO2. Catalyzes the decarboxylation of 3-oxo-tetronate 4-phosphate to dihydroxyacetone phosphate (DHAP) and CO(2). The protein is 3-oxo-tetronate 4-phosphate decarboxylase of Escherichia coli O6:H1 (strain CFT073 / ATCC 700928 / UPEC).